Here is a 291-residue protein sequence, read N- to C-terminus: 4-hydroxy-tetrahydrodipicolinate synthase (291 aa).

Thr-45 provides a ligand contact to pyruvate. Tyr-133 (proton donor/acceptor) is an active-site residue. Lys-161 (schiff-base intermediate with substrate) is an active-site residue. Ile-203 lines the pyruvate pocket.

This sequence belongs to the DapA family. As to quaternary structure, homotetramer; dimer of dimers.

It localises to the cytoplasm. It carries out the reaction L-aspartate 4-semialdehyde + pyruvate = (2S,4S)-4-hydroxy-2,3,4,5-tetrahydrodipicolinate + H2O + H(+). Its pathway is amino-acid biosynthesis; L-lysine biosynthesis via DAP pathway; (S)-tetrahydrodipicolinate from L-aspartate: step 3/4. Its function is as follows. Catalyzes the condensation of (S)-aspartate-beta-semialdehyde [(S)-ASA] and pyruvate to 4-hydroxy-tetrahydrodipicolinate (HTPA). The polypeptide is 4-hydroxy-tetrahydrodipicolinate synthase (Acidithiobacillus ferrooxidans (strain ATCC 23270 / DSM 14882 / CIP 104768 / NCIMB 8455) (Ferrobacillus ferrooxidans (strain ATCC 23270))).